The primary structure comprises 193 residues: Protein PrsJ (193 aa).

An N-terminal signal peptide occupies residues 1–27 (MVVNKTTAVLYLIALSLSGFIHTFLRA).

The protein resides in the periplasm. In terms of biological role, this protein maintains pilus integrity and thus is an important participant in pilus assembly. It may function as molecular chaperone directly or indirectly in the correct assembly of PapA subunits. The chain is Protein PrsJ (prsJ) from Escherichia coli.